The chain runs to 246 residues: NAD-dependent protein deacetylase (246 aa).

The Deacetylase sirtuin-type domain maps to 1–246 (MKMKEFLDLL…RRVMEEGGIS (246 aa)). NAD(+)-binding residues include alanine 22, threonine 26, phenylalanine 33, arginine 34, glutamine 98, isoleucine 100, aspartate 101, and histidine 116. Residue phenylalanine 33 coordinates nicotinamide. Residues isoleucine 100 and aspartate 101 each contribute to the nicotinamide site. The active-site Proton acceptor is histidine 116. Residues cysteine 124, cysteine 127, cysteine 148, and cysteine 151 each contribute to the Zn(2+) site. NAD(+)-binding residues include serine 189, serine 190, asparagine 214, leucine 215, glycine 216, aspartate 231, and valine 232.

The protein belongs to the sirtuin family. Class U subfamily. Zn(2+) is required as a cofactor.

The protein localises to the cytoplasm. The catalysed reaction is N(6)-acetyl-L-lysyl-[protein] + NAD(+) + H2O = 2''-O-acetyl-ADP-D-ribose + nicotinamide + L-lysyl-[protein]. Non-competitively inhibited by nicotinamide in vitro and in vivo, but not by nicotinic acid. Nicotinamide inhibits the deacetylation activity by reacting with a reaction intermediate. NAD-dependent protein deacetylase which modulates the activities of several enzymes which are inactive in their acetylated form. Also has depropionylation activity in vitro. Also able to ADP-ribosylate peptide substrates with Arg or Lys in the +2 position. The role of this function in vivo is not clear. This is NAD-dependent protein deacetylase from Thermotoga maritima (strain ATCC 43589 / DSM 3109 / JCM 10099 / NBRC 100826 / MSB8).